We begin with the raw amino-acid sequence, 166 residues long: Putative 4-hydroxy-4-methyl-2-oxoglutarate aldolase (166 aa).

Substrate is bound by residues 74-77 (GDQI) and R96. Residue D97 participates in a divalent metal cation binding.

Belongs to the class II aldolase/RraA-like family. As to quaternary structure, homotrimer. Requires a divalent metal cation as cofactor.

It catalyses the reaction 4-hydroxy-4-methyl-2-oxoglutarate = 2 pyruvate. The catalysed reaction is oxaloacetate + H(+) = pyruvate + CO2. In terms of biological role, catalyzes the aldol cleavage of 4-hydroxy-4-methyl-2-oxoglutarate (HMG) into 2 molecules of pyruvate. Also contains a secondary oxaloacetate (OAA) decarboxylase activity due to the common pyruvate enolate transition state formed following C-C bond cleavage in the retro-aldol and decarboxylation reactions. The protein is Putative 4-hydroxy-4-methyl-2-oxoglutarate aldolase of Xanthomonas oryzae pv. oryzae (strain MAFF 311018).